The following is a 904-amino-acid chain: Protein translocase subunit SecA (904 aa).

ATP contacts are provided by residues Q87, 105–109, and D507; that span reads GEGKT. The disordered stretch occupies residues 865 to 887; that stretch reads GEGAEAAGQQPADAGPKIGRNDP. Low complexity predominate over residues 868–880; sequence AEAAGQQPADAGP. Zn(2+)-binding residues include C888, C890, C899, and H900.

This sequence belongs to the SecA family. Monomer and homodimer. Part of the essential Sec protein translocation apparatus which comprises SecA, SecYEG and auxiliary proteins SecDF-YajC and YidC. Zn(2+) is required as a cofactor.

It is found in the cell inner membrane. It localises to the cytoplasm. It catalyses the reaction ATP + H2O + cellular proteinSide 1 = ADP + phosphate + cellular proteinSide 2.. Functionally, part of the Sec protein translocase complex. Interacts with the SecYEG preprotein conducting channel. Has a central role in coupling the hydrolysis of ATP to the transfer of proteins into and across the cell membrane, serving both as a receptor for the preprotein-SecB complex and as an ATP-driven molecular motor driving the stepwise translocation of polypeptide chains across the membrane. This chain is Protein translocase subunit SecA, found in Dechloromonas aromatica (strain RCB).